Here is a 321-residue protein sequence, read N- to C-terminus: Leucine-rich repeat-containing protein 46 (321 aa).

4 LRR repeats span residues 45 to 66 (ELQT…EGLK), 67 to 88 (NLHS…ACVP), 89 to 110 (SLRF…LDLP), and 111 to 132 (CLQF…EFPQ). Positions 142-184 (NSCTNQDSYRELVIEALPLLLDLDGQPVMERWISDEEDEASSE) constitute an LRRCT domain. Phosphoserine occurs at positions 175 and 182. A coiled-coil region spans residues 198–222 (RGFLKELEQELSRHREHRQQAALTQ). A disordered region spans residues 235–321 (NLPLLPGVPM…TKTMAKRSKK (87 aa)).

It is found in the cell projection. The protein localises to the cilium. The protein resides in the flagellum. Functionally, required for normal spermatogenesis and male fertility. Plays an important role in sperm flagellum biogenesis. The polypeptide is Leucine-rich repeat-containing protein 46 (LRRC46) (Macaca fascicularis (Crab-eating macaque)).